We begin with the raw amino-acid sequence, 303 residues long: Oxygen-dependent coproporphyrinogen-III oxidase (303 aa).

Substrate is bound at residue Ser93. A divalent metal cation is bound by residues His97 and His107. Catalysis depends on His107, which acts as the Proton donor. Residue 109–111 (NVR) participates in substrate binding. Positions 146 and 176 each coordinate a divalent metal cation. Residues 241 to 276 (YVEFNLVYDRGTLFGLQSGGRTESILMSLPPQVRWG) form an important for dimerization region. 259–261 (GGR) serves as a coordination point for substrate.

Belongs to the aerobic coproporphyrinogen-III oxidase family. As to quaternary structure, homodimer. Requires a divalent metal cation as cofactor.

It is found in the cytoplasm. The enzyme catalyses coproporphyrinogen III + O2 + 2 H(+) = protoporphyrinogen IX + 2 CO2 + 2 H2O. It functions in the pathway porphyrin-containing compound metabolism; protoporphyrin-IX biosynthesis; protoporphyrinogen-IX from coproporphyrinogen-III (O2 route): step 1/1. Involved in the heme biosynthesis. Catalyzes the aerobic oxidative decarboxylation of propionate groups of rings A and B of coproporphyrinogen-III to yield the vinyl groups in protoporphyrinogen-IX. This is Oxygen-dependent coproporphyrinogen-III oxidase from Pseudomonas putida (strain ATCC 47054 / DSM 6125 / CFBP 8728 / NCIMB 11950 / KT2440).